A 278-amino-acid polypeptide reads, in one-letter code: Adenosylcobinamide-GDP ribazoletransferase (278 aa).

6 helical membrane-spanning segments follow: residues 44-64, 69-89, 121-141, 161-181, 204-224, and 227-247; these read GIGV…QLLL, FTPL…TGGF, AFGA…LALL, VCAA…VMIW, GGLA…SLAL, and INLI…LRFF.

Belongs to the CobS family. Mg(2+) serves as cofactor.

The protein localises to the cell inner membrane. The enzyme catalyses alpha-ribazole + adenosylcob(III)inamide-GDP = adenosylcob(III)alamin + GMP + H(+). It catalyses the reaction alpha-ribazole 5'-phosphate + adenosylcob(III)inamide-GDP = adenosylcob(III)alamin 5'-phosphate + GMP + H(+). It functions in the pathway cofactor biosynthesis; adenosylcobalamin biosynthesis; adenosylcobalamin from cob(II)yrinate a,c-diamide: step 7/7. In terms of biological role, joins adenosylcobinamide-GDP and alpha-ribazole to generate adenosylcobalamin (Ado-cobalamin). Also synthesizes adenosylcobalamin 5'-phosphate from adenosylcobinamide-GDP and alpha-ribazole 5'-phosphate. This is Adenosylcobinamide-GDP ribazoletransferase from Polaromonas naphthalenivorans (strain CJ2).